The chain runs to 434 residues: Serine hydroxymethyltransferase (434 aa).

(6S)-5,6,7,8-tetrahydrofolate is bound by residues leucine 133 and 137-139; that span reads GHL. Lysine 242 bears the N6-(pyridoxal phosphate)lysine mark.

This sequence belongs to the SHMT family. As to quaternary structure, homodimer. Pyridoxal 5'-phosphate is required as a cofactor.

The protein resides in the cytoplasm. The catalysed reaction is (6R)-5,10-methylene-5,6,7,8-tetrahydrofolate + glycine + H2O = (6S)-5,6,7,8-tetrahydrofolate + L-serine. It participates in one-carbon metabolism; tetrahydrofolate interconversion. Its pathway is amino-acid biosynthesis; glycine biosynthesis; glycine from L-serine: step 1/1. In terms of biological role, catalyzes the reversible interconversion of serine and glycine with tetrahydrofolate (THF) serving as the one-carbon carrier. This reaction serves as the major source of one-carbon groups required for the biosynthesis of purines, thymidylate, methionine, and other important biomolecules. Also exhibits THF-independent aldolase activity toward beta-hydroxyamino acids, producing glycine and aldehydes, via a retro-aldol mechanism. This chain is Serine hydroxymethyltransferase, found in Bradyrhizobium sp. (strain BTAi1 / ATCC BAA-1182).